Here is a 295-residue protein sequence, read N- to C-terminus: Glutamyl-Q tRNA(Asp) synthetase (295 aa).

L-glutamate contacts are provided by residues 5-9 and Glu-41; that span reads RFAPS. The 'HIGH' region motif lies at 8 to 18; sequence PSPTGLLHIGS. Zn(2+) contacts are provided by Cys-97, Cys-99, Tyr-117, and Cys-121. Residues Tyr-178 and Arg-196 each contribute to the L-glutamate site. Residues 234–238 carry the 'KMSKS' region motif; the sequence is KWSKQ. Residue Lys-237 participates in ATP binding.

This sequence belongs to the class-I aminoacyl-tRNA synthetase family. GluQ subfamily. Zn(2+) serves as cofactor.

Its function is as follows. Catalyzes the tRNA-independent activation of glutamate in presence of ATP and the subsequent transfer of glutamate onto a tRNA(Asp). Glutamate is transferred on the 2-amino-5-(4,5-dihydroxy-2-cyclopenten-1-yl) moiety of the queuosine in the wobble position of the QUC anticodon. This chain is Glutamyl-Q tRNA(Asp) synthetase, found in Neisseria meningitidis serogroup C / serotype 2a (strain ATCC 700532 / DSM 15464 / FAM18).